We begin with the raw amino-acid sequence, 147 residues long: Hemoglobin subunit beta-2 (147 aa).

The 145-residue stretch at 3–147 (EWTDSERAII…VVSALGRQYH (145 aa)) folds into the Globin domain. Heme b is bound by residues H64 and H93.

Belongs to the globin family. In terms of assembly, hb 3 is a heterotetramer of two alpha-2 and two beta-2 chains. As to expression, red blood cells.

Functionally, involved in oxygen transport from gills to the various peripheral tissues. The polypeptide is Hemoglobin subunit beta-2 (hbb2) (Boreogadus saida (Polar cod)).